Reading from the N-terminus, the 361-residue chain is Phospho-N-acetylmuramoyl-pentapeptide-transferase (361 aa).

Helical transmembrane passes span 25–45 (RGIL…PAVI), 73–93 (TMGG…WGDL), 98–118 (VWLV…DDWI), 139–159 (IFGL…AAIT), 168–188 (IALP…IVGF), 200–220 (GLAI…AYAS), 237–257 (AGEL…FLWF), 264–284 (VFMG…IAVI), 289–309 (MVLV…IIQV), and 339–359 (VIVR…ATLK).

Belongs to the glycosyltransferase 4 family. MraY subfamily. Mg(2+) is required as a cofactor.

It localises to the cell inner membrane. The enzyme catalyses UDP-N-acetyl-alpha-D-muramoyl-L-alanyl-gamma-D-glutamyl-meso-2,6-diaminopimeloyl-D-alanyl-D-alanine + di-trans,octa-cis-undecaprenyl phosphate = di-trans,octa-cis-undecaprenyl diphospho-N-acetyl-alpha-D-muramoyl-L-alanyl-D-glutamyl-meso-2,6-diaminopimeloyl-D-alanyl-D-alanine + UMP. It participates in cell wall biogenesis; peptidoglycan biosynthesis. In terms of biological role, catalyzes the initial step of the lipid cycle reactions in the biosynthesis of the cell wall peptidoglycan: transfers peptidoglycan precursor phospho-MurNAc-pentapeptide from UDP-MurNAc-pentapeptide onto the lipid carrier undecaprenyl phosphate, yielding undecaprenyl-pyrophosphoryl-MurNAc-pentapeptide, known as lipid I. In Xanthomonas oryzae pv. oryzae (strain PXO99A), this protein is Phospho-N-acetylmuramoyl-pentapeptide-transferase.